The sequence spans 97 residues: Putative pterin-4-alpha-carbinolamine dehydratase (97 aa).

Belongs to the pterin-4-alpha-carbinolamine dehydratase family.

The catalysed reaction is (4aS,6R)-4a-hydroxy-L-erythro-5,6,7,8-tetrahydrobiopterin = (6R)-L-erythro-6,7-dihydrobiopterin + H2O. The chain is Putative pterin-4-alpha-carbinolamine dehydratase from Dinoroseobacter shibae (strain DSM 16493 / NCIMB 14021 / DFL 12).